The sequence spans 255 residues: Ribonuclease HII (255 aa).

Residues glutamine 72–glutamate 255 enclose the RNase H type-2 domain. Residues aspartate 78, glutamate 79, and aspartate 170 each coordinate a divalent metal cation.

This sequence belongs to the RNase HII family. Requires Mn(2+) as cofactor. Mg(2+) is required as a cofactor.

It localises to the cytoplasm. The catalysed reaction is Endonucleolytic cleavage to 5'-phosphomonoester.. Functionally, endonuclease that specifically degrades the RNA of RNA-DNA hybrids. In Bacillus licheniformis (strain ATCC 14580 / DSM 13 / JCM 2505 / CCUG 7422 / NBRC 12200 / NCIMB 9375 / NCTC 10341 / NRRL NRS-1264 / Gibson 46), this protein is Ribonuclease HII.